The primary structure comprises 67 residues: Preprofallaxidin-4 (67 aa).

A signal peptide spans 1-22; the sequence is MASLKKFLFLVLFLGMVSLSIC. The propeptide occupies 23–46; it reads DKEKREGENEEEEEEHEEESEEKR. A disordered region spans residues 24–48; that stretch reads KEKREGENEEEEEEHEEESEEKRGL. Over residues 30 to 42 the composition is skewed to acidic residues; the sequence is ENEEEEEEHEEES.

The protein belongs to the frog skin active peptide (FSAP) family. Dermaseptin subfamily. As to expression, expressed by the skin glands.

Its subcellular location is the secreted. This Litoria fallax (Eastern dwarf tree frog) protein is Preprofallaxidin-4.